We begin with the raw amino-acid sequence, 469 residues long: Protein RUFY3 (469 aa).

Phosphothreonine occurs at positions 5 and 12. 2 positions are modified to phosphoserine: serine 34 and serine 49. Phosphothreonine is present on threonine 51. Positions 95–227 constitute an RUN domain; the sequence is DSDYAPLQQF…IDANFCMKGE (133 aa). 2 coiled-coil regions span residues 271–362 and 422–463; these read NRHL…VEKE and KSEL…AANK.

Interacts with PAK1. Interacts (via C-terminus) with Ras-related Rab-5 proteins. Interacts (via C-terminus) with Ras-related Rap-2 proteins. Interacts with PIK3CA and PIK3R1. Interacts (via N-terminus) with FSCN1; this interaction induces neuron axon development. Interacts with DBN1. Interacts (via the second coiled coil) with GTP-, but not GDP-bound ARL8A and ARL8B. Interacts with dynactin/DCTN1 and the dynein intermediate chain DYNC1I1/2. Directly interacts with DYNC1LI1. Phosphorylated by PAK1.

Its subcellular location is the cytoplasm. The protein resides in the endomembrane system. The protein localises to the cell projection. It localises to the invadopodium. It is found in the growth cone. Its subcellular location is the perikaryon. The protein resides in the filopodium. The protein localises to the lamellipodium. It localises to the lysosome. ARL8 effector that promotes the coupling of endolysosomes to dynein-dynactin for retrograde transport along microtubules. Acts by binding both GTP-bound ARL8 and dynein-dynactin. In nonneuronal cells, promotes concentration of endolysosomes in the juxtanuclear area. In hippocampal neurons, drives retrograde transport of endolysosomes from the axon to the soma. Plays a role in the generation of neuronal polarity formation and axon growth. Implicated in the formation of a single axon by developing neurons. May inhibit the formation of additional axons by inhibition of PI3K in minor neuronal processes. Plays a role in the formation of F-actin-enriched protrusive structures at the cell periphery. Plays a role in cytoskeletal organization by regulating the subcellular localization of FSCN1 and DBN1 at axonal growth cones. The polypeptide is Protein RUFY3 (Pongo abelii (Sumatran orangutan)).